A 938-amino-acid polypeptide reads, in one-letter code: Microperfuranone synthase (938 aa).

The adenylation (A) domain stretch occupies residues 44–445 (TSTRISYAEL…AGRTKDTIIV (402 aa)). Positions 579-655 (SDSERAVQKA…AIARSIDSSR (77 aa)) constitute a Carrier domain. The tract at residues 581–652 (SERAVQKALV…TPGAIARSID (72 aa)) is thiolation and peptide carrier (T) domain. S613 is modified (O-(pantetheine 4'-phosphoryl)serine). Residues 676–923 (PLFCIHPGSG…AKMLNREHIA (248 aa)) are thioesterase (TE) domain. The active site involves S746.

The protein belongs to the ATP-dependent AMP-binding enzyme family.

It functions in the pathway secondary metabolite biosynthesis. Functionally, microperfuranone synthase is the only protein required for the biosynthesis of the secondary metabolite microperfuranone from phenylpyruvic acid (PPA). Several steps for the microperfuranione biosynthesis have been proposed. These steps include the activation of PPA, by the micA adenylation (A) domain to AMP-phenylpyruvic acid followed by loading of the PPA unit to the thiolation and peptide carrier (T) domain and eventually transferring to the thioesterase (TE) domain. After loading another PPA unit onto the T domain, aldol condensation establishes the carbon-carbon bond between the alpha- and beta-carbon of the two PPA units. Sulfur-assisted furan ring formation, TE domain mediated hydrolysis, decarboxylation, and keto-enol tautomerization would generate microperfuranone attached to the T domain. Finally, microperfuranone is released by the TE domain. This chain is Microperfuranone synthase, found in Emericella nidulans (strain FGSC A4 / ATCC 38163 / CBS 112.46 / NRRL 194 / M139) (Aspergillus nidulans).